Reading from the N-terminus, the 380-residue chain is DNA replication and repair protein RecF (380 aa).

30–37 (GNNAQGKS) serves as a coordination point for ATP.

It belongs to the RecF family.

The protein localises to the cytoplasm. The RecF protein is involved in DNA metabolism; it is required for DNA replication and normal SOS inducibility. RecF binds preferentially to single-stranded, linear DNA. It also seems to bind ATP. The chain is DNA replication and repair protein RecF from Rippkaea orientalis (strain PCC 8801 / RF-1) (Cyanothece sp. (strain PCC 8801)).